Reading from the N-terminus, the 143-residue chain is Large ribosomal subunit protein uL11 (143 aa).

The protein belongs to the universal ribosomal protein uL11 family. As to quaternary structure, part of the ribosomal stalk of the 50S ribosomal subunit. Interacts with L10 and the large rRNA to form the base of the stalk. L10 forms an elongated spine to which L12 dimers bind in a sequential fashion forming a multimeric L10(L12)X complex. In terms of processing, one or more lysine residues are methylated.

In terms of biological role, forms part of the ribosomal stalk which helps the ribosome interact with GTP-bound translation factors. This Azotobacter vinelandii (strain DJ / ATCC BAA-1303) protein is Large ribosomal subunit protein uL11.